Consider the following 380-residue polypeptide: O-antigen polymerase (380 aa).

12 helical membrane passes run 1–21, 27–47, 55–75, 94–114, 132–152, 169–189, 201–221, 229–249, 282–302, 306–326, 332–352, and 353–373; these read MTYF…RLTP, NIVL…TFNE, ATTL…YILI, YIYW…IILL, SISG…MYLA, FLLA…VYIV, LIYG…LGKF, IISA…AAFN, ILPW…FAPW, LGLY…GIWF, LAVG…FFQE, and HYLL…LLAM.

The protein resides in the cell inner membrane. It carries out the reaction n lipid-linked O-antigen repeat units = a lipid-linked O antigen + (n-1) polyisoprenyl diphosphate.. It functions in the pathway bacterial outer membrane biogenesis; LPS O-antigen biosynthesis. In terms of biological role, polymerase involved in the biosynthesis of the lipopolysaccharide (LPS). Catalyzes the polymerization of the O-antigen repeat units on the periplasmic face of the inner membrane, leading to the formation of the lipid-linked O-antigen molecule. This chain is O-antigen polymerase, found in Shigella dysenteriae.